Reading from the N-terminus, the 207-residue chain is LPS-assembly lipoprotein LptE (207 aa).

Positions 1–19 are cleaved as a signal peptide; sequence MRHRILMLLLGLAVLVTAG. Cys20 carries the N-palmitoyl cysteine lipid modification. Cys20 carries S-diacylglycerol cysteine lipidation.

This sequence belongs to the LptE lipoprotein family. As to quaternary structure, component of the lipopolysaccharide transport and assembly complex. Interacts with LptD.

The protein resides in the cell outer membrane. Functionally, together with LptD, is involved in the assembly of lipopolysaccharide (LPS) at the surface of the outer membrane. Required for the proper assembly of LptD. Binds LPS and may serve as the LPS recognition site at the outer membrane. The polypeptide is LPS-assembly lipoprotein LptE (Yersinia enterocolitica serotype O:8 / biotype 1B (strain NCTC 13174 / 8081)).